The sequence spans 175 residues: Probable RNA-binding protein EIF1AD (175 aa).

The 85-residue stretch at 5–89 (TKKRYITNKV…VKGEIEYILD (85 aa)) folds into the S1-like domain. The span at 116–128 (EAKRGQTSDKMID) shows a compositional bias: basic and acidic residues. Residues 116-175 (EAKRGQTSDKMIDDDMLPPSESEEEDESEGEETYDEDDVDDEEEEEFDTYNPNRMQAPSK) form a disordered region. Residues 129–163 (DDMLPPSESEEEDESEGEETYDEDDVDDEEEEEFD) show a composition bias toward acidic residues. Residues 165-175 (YNPNRMQAPSK) show a composition bias toward polar residues.

This sequence belongs to the EIF1AD family.

The protein is Probable RNA-binding protein EIF1AD of Caenorhabditis elegans.